Consider the following 422-residue polypeptide: Gamma-glutamyl phosphate reductase (422 aa).

This sequence belongs to the gamma-glutamyl phosphate reductase family.

The protein resides in the cytoplasm. The catalysed reaction is L-glutamate 5-semialdehyde + phosphate + NADP(+) = L-glutamyl 5-phosphate + NADPH + H(+). It participates in amino-acid biosynthesis; L-proline biosynthesis; L-glutamate 5-semialdehyde from L-glutamate: step 2/2. Catalyzes the NADPH-dependent reduction of L-glutamate 5-phosphate into L-glutamate 5-semialdehyde and phosphate. The product spontaneously undergoes cyclization to form 1-pyrroline-5-carboxylate. The polypeptide is Gamma-glutamyl phosphate reductase (Nitrosomonas eutropha (strain DSM 101675 / C91 / Nm57)).